The primary structure comprises 631 residues: ATP-dependent protease PrkA (631 aa).

Position 217 is a phosphothreonine (threonine 217). Phosphoserine is present on serine 219.

It belongs to the PrkA family. Post-translationally, phosphorylated by PrkC on two sites, Thr-217 and Ser-219, with the threonine being the major site of modification.

The protein resides in the forespore. It is found in the spore coat. The catalysed reaction is Hydrolysis of proteins in presence of ATP.. Its activity is regulated as follows. Hydrolase activity is regulated by phosphorylation by the Ser/Thr kinase PrkC, probably allowing fine control of sporulation. Phosphorylation by PrkC does not prevent ATP fixation but it inhibits specifically PrkA protease activity and down-regulates the sporulation processes. Hydrolase activity is inhibited by a protease inhibitor, phenylmethylsulfonyl fluoride (PMSF). Potential kinase activity requires the presence of MgCl(2) and is inhibited in the presence of MnCl(2). Functionally, ATP-dependent protease that regulates sporulation. Is able to bind and hydrolyze ATP. This ATP-dependent protease activity is necessary for efficient sporulation of B.subtilis. In vitro, can hydrolyze alpha-casein, an exogenous substrate of Lon proteases, in an ATP-dependent manner. PrkA also modulates sporulation by negatively regulating the transcriptional regulator Hpr/ScoC to induce the expression of sigK. The control of sporulation mediated via the Hpr/ScoC regulator is probably indirect. PrkA was originally thought to be a protein kinase, as it has been shown to phosphorylate in vitro an unidentified 60 kDa protein from B.subtilis crude extracts at a serine residue. However, Zhang et al. did not observe autophosphorylation or kinase activity for this protein, suggesting that it may have lost its kinase activity during evolution or may be a pseudokinase. The protein is ATP-dependent protease PrkA of Bacillus subtilis (strain 168).